The chain runs to 105 residues: Venom metalloprotease inhibitor (105 aa).

The N-terminal stretch at 1–21 (MFRFVCVLFIALVVFCTTTSA) is a signal peptide. 5 cysteine pairs are disulfide-bonded: cysteine 26/cysteine 61, cysteine 35/cysteine 57, cysteine 39/cysteine 50, cysteine 43/cysteine 83, and cysteine 63/cysteine 77. The TIL domain maps to 26–83 (CNRPNEEYRCGSACQTTCATLGQRCPIMNIRCNDACYCKEGYARYGDDTGMCVSISQC).

This sequence belongs to the serine protease inhibitor-like (TIL domain-containing) family. In terms of tissue distribution, expressed by the venom gland.

It localises to the secreted. Its function is as follows. Inhibits metalloprotease (human MMP3), trypsin, chymotrypsin, plasmin and microbial serine protease (proteinase K). Exhibits antifibrinolytic activity by binding plasmin and inhibiting it. Does not inhibit elastase, thrombin or microbial serine protease (subtilisin A). This Bombus ignitus (Bumblebee) protein is Venom metalloprotease inhibitor.